The sequence spans 671 residues: Preterminal protein (671 aa).

A Nuclear localization signal motif is present at residues 380-389; the sequence is RLPVRRRRRR. The tract at residues 386–411 is disordered; that stretch reads RRRRVPPPPPPPEEEEGEALMEEEIE. Positions 397–411 are enriched in acidic residues; sequence PEEEEGEALMEEEIE. Ser-580 bears the O-(5'-phospho-DNA)-serine mark. Residues 645–671 form a disordered region; that stretch reads GADVPLPPLPAGPEPPLPPGARPRHRF. The segment covering 649-665 has biased composition (pro residues); sequence PLPPLPAGPEPPLPPGA.

Belongs to the adenoviridae terminal protein family. In terms of assembly, heterodimer with the polymerase; this heterodimer binds to bp 9 to 18 of the genome. Interacts with host POU2F1; POU2F1 binds to the auxiliary sequences in the inverted terminal repeats and tethers the pTP-POL heterodimer to the origin DNA thereby participating in the assembly of the pre-initiation complex (POL-TP-DBP-NFIA-POU2F1). In terms of processing, preterminal protein is used to replicate viral genome, upon genomic encapsidation it is processed first into iTP and finally into TP by adenovirus protease.

Its subcellular location is the host nucleus matrix. Its function is as follows. Protein covalently bound to the viral DNA that acts as a primer for viral genomic replication by DNA strand displacement. Assembles on the viral origin of replication in an initiation complex with viral polymerase, DBP, host NFIA and host POU2F1/OCT1. During initiation, the polymerase covalently couples the first dCTP with Ser-580 of pTP. The terminal protein stimulates the template activity over 20 fold compared to protein-free templates. Neo-synthesized viral genomes are linked to two preterminal proteins, one for each 5' end. These new genomes are encapsidated in the nucleus, and during capsid maturation by viral protease, preterminal protein is first cleaved into intermediary (iTP), then into mature TP. May play a role in host nuclear matrix localization of genomic DNA. This chain is Preterminal protein, found in Human adenovirus C serotype 5 (HAdV-5).